Reading from the N-terminus, the 501-residue chain is ADP,ATP carrier protein 3 (501 aa).

12 helical membrane passes run 23–43, 59–79, 90–110, 146–166, 183–203, 227–247, 293–313, 326–346, 361–381, 387–407, 446–466, and 470–490; these read LKLF…FGAL, IISF…TVLY, YIFY…AYII, YALM…LMFW, PVLG…LVFF, IMLQ…MLLF, IALL…PWKA, VNFM…FMII, LLTP…IIFI, CFGD…QNIL, FGKS…PTAT, and IIIY…WNVI.

This sequence belongs to the ADP/ATP translocase tlc family.

The protein resides in the cell membrane. Functionally, provides the rickettsial cell with host ATP in exchange for rickettsial ADP. This is an obligate exchange system. This energy acquiring activity is an important component of rickettsial parasitism. The chain is ADP,ATP carrier protein 3 (tlcC) from Rickettsia conorii (strain ATCC VR-613 / Malish 7).